A 513-amino-acid chain; its full sequence is ATP synthase subunit alpha (513 aa).

An ATP-binding site is contributed by 169 to 176; that stretch reads GDRQTGKT.

This sequence belongs to the ATPase alpha/beta chains family. F-type ATPases have 2 components, CF(1) - the catalytic core - and CF(0) - the membrane proton channel. CF(1) has five subunits: alpha(3), beta(3), gamma(1), delta(1), epsilon(1). CF(0) has three main subunits: a(1), b(2) and c(9-12). The alpha and beta chains form an alternating ring which encloses part of the gamma chain. CF(1) is attached to CF(0) by a central stalk formed by the gamma and epsilon chains, while a peripheral stalk is formed by the delta and b chains.

The protein localises to the cell inner membrane. It carries out the reaction ATP + H2O + 4 H(+)(in) = ADP + phosphate + 5 H(+)(out). Its function is as follows. Produces ATP from ADP in the presence of a proton gradient across the membrane. The alpha chain is a regulatory subunit. The chain is ATP synthase subunit alpha from Shewanella denitrificans (strain OS217 / ATCC BAA-1090 / DSM 15013).